The sequence spans 157 residues: 2-C-methyl-D-erythritol 2,4-cyclodiphosphate synthase (157 aa).

A divalent metal cation is bound by residues Asp9 and His11. 4-CDP-2-C-methyl-D-erythritol 2-phosphate contacts are provided by residues 9–11 (DVH) and 35–36 (HS). An a divalent metal cation-binding site is contributed by His43. Residues 57–59 (DIG), 62–66 (FPDTD), 101–107 (AEKPKMA), 133–136 (TTTE), Phe140, and Arg143 contribute to the 4-CDP-2-C-methyl-D-erythritol 2-phosphate site.

Belongs to the IspF family. Homotrimer. The cofactor is a divalent metal cation.

The enzyme catalyses 4-CDP-2-C-methyl-D-erythritol 2-phosphate = 2-C-methyl-D-erythritol 2,4-cyclic diphosphate + CMP. It functions in the pathway isoprenoid biosynthesis; isopentenyl diphosphate biosynthesis via DXP pathway; isopentenyl diphosphate from 1-deoxy-D-xylulose 5-phosphate: step 4/6. Involved in the biosynthesis of isopentenyl diphosphate (IPP) and dimethylallyl diphosphate (DMAPP), two major building blocks of isoprenoid compounds. Catalyzes the conversion of 4-diphosphocytidyl-2-C-methyl-D-erythritol 2-phosphate (CDP-ME2P) to 2-C-methyl-D-erythritol 2,4-cyclodiphosphate (ME-CPP) with a corresponding release of cytidine 5-monophosphate (CMP). The protein is 2-C-methyl-D-erythritol 2,4-cyclodiphosphate synthase of Listeria monocytogenes serovar 1/2a (strain ATCC BAA-679 / EGD-e).